The sequence spans 229 residues: Probable methylthioribulose-1-phosphate dehydratase (229 aa).

Substrate is bound at residue C97. Residues H115 and H117 each contribute to the Zn(2+) site. The active-site Proton donor/acceptor is the E139. A Zn(2+)-binding site is contributed by H195.

It belongs to the aldolase class II family. MtnB subfamily. It depends on Zn(2+) as a cofactor.

The protein localises to the cytoplasm. It carries out the reaction 5-(methylsulfanyl)-D-ribulose 1-phosphate = 5-methylsulfanyl-2,3-dioxopentyl phosphate + H2O. The protein operates within amino-acid biosynthesis; L-methionine biosynthesis via salvage pathway; L-methionine from S-methyl-5-thio-alpha-D-ribose 1-phosphate: step 2/6. Its function is as follows. Catalyzes the dehydration of methylthioribulose-1-phosphate (MTRu-1-P) into 2,3-diketo-5-methylthiopentyl-1-phosphate (DK-MTP-1-P). This Acyrthosiphon pisum (Pea aphid) protein is Probable methylthioribulose-1-phosphate dehydratase.